We begin with the raw amino-acid sequence, 323 residues long: Serine/threonine-protein phosphatase PP1-gamma catalytic subunit (323 aa).

A2 carries the post-translational modification N-acetylalanine. Residues D64, H66, D92, and N124 each coordinate Mn(2+). The active-site Proton donor is H125. Positions 173 and 248 each coordinate Mn(2+). T307 and T311 each carry phosphothreonine.

It belongs to the PPP phosphatase family. PP-1 subfamily. PP1 comprises a catalytic subunit, PPP1CA, PPP1CB or PPP1CC, which is folded into its native form by inhibitor 2 and glycogen synthetase kinase 3, and then complexed to one or several targeting or regulatory subunits. PPP1R12A, PPP1R12B and PPP1R12C mediate binding to myosin. PPP1R3A (in skeletal muscle), PPP1R3B (in liver), PPP1R3C, PPP1R3D and PPP1R3F (in brain) mediate binding to glycogen. PPP1R15A and PPP1R15B mediate binding to EIF2S1. Part of a complex containing PPP1R15B, PP1 and NCK1/2. Interacts with PPP1R3B, PPP1R7 and CDCA2. Interacts with IKFZ1; the interaction targets PPP1CC to pericentromeric heterochromatin, dephosphorylates IKAROS, stabilizes it and prevents it from degradation. Interacts with NOM1 and PPP1R8. Component of the PTW/PP1 phosphatase complex, composed of PPP1R10/PNUTS, TOX4, WDR82, and PPP1CA or PPP1CB or PPP1CC. Interacts with PPP1R8. Interacts with NEK2. Interacts with PPP1R42; the interaction is direct. Interacts with URI1; the interaction is phosphorylation-dependent and occurs in a growth factor-dependent manner. Interacts with FOXP3. Interacts with TMEM225 (via RVxF motif). Interacts with MKI67. Interacts with RRP1B; this targets PPP1CC to the nucleolus. Interacts with DYNLT4. Interacts (via RVxF motif) with FIRRM; regulates PLK1 kinase activity. Interacts with the KNL1 complex subunit KNL1; the interaction is direct and mutually exclusive with KNL1 binding to microtubules. Component of the SHOC2-MRAS-PP1c (SMP) complex consisting of SHOC2, GTP-bound M-Ras/MRAS and the catalytic subunit of protein phosphatase 1 (either PPP1CA, PPP1CB or PPP1CC). SHOC2 and PP1c preferably bind M-Ras/MRAS, but they also bind K-Ras/KRAS, N-Ras/NRAS and H-Ras/HRAS; these interactions are GTP-dependent and both SHOC2 and PP1c are required to form a stable complex. Interacts with SHOC2 in the absence of Ras GTPases. The cofactor is Mn(2+). Phosphorylated by NEK2.

The protein resides in the cytoplasm. It localises to the nucleus. It is found in the cleavage furrow. Its subcellular location is the nucleolus. The protein localises to the nucleoplasm. The protein resides in the chromosome. It localises to the centromere. It is found in the kinetochore. Its subcellular location is the nucleus speckle. The protein localises to the midbody. The protein resides in the mitochondrion. It localises to the cytoskeleton. It is found in the microtubule organizing center. The catalysed reaction is O-phospho-L-seryl-[protein] + H2O = L-seryl-[protein] + phosphate. The enzyme catalyses O-phospho-L-threonyl-[protein] + H2O = L-threonyl-[protein] + phosphate. With respect to regulation, inactivated by binding to URI1. Protein phosphatase that associates with over 200 regulatory proteins to form highly specific holoenzymes which dephosphorylate hundreds of biological targets. Protein phosphatase 1 (PP1) is essential for cell division, and participates in the regulation of glycogen metabolism, muscle contractility and protein synthesis. Dephosphorylates RPS6KB1. Involved in regulation of ionic conductances and long-term synaptic plasticity. May play an important role in dephosphorylating substrates such as the postsynaptic density-associated Ca(2+)/calmodulin dependent protein kinase II. Component of the PTW/PP1 phosphatase complex, which plays a role in the control of chromatin structure and cell cycle progression during the transition from mitosis into interphase. Regulates the recruitment of the SKA complex to kinetochores. Core component of the SHOC2-MRAS-PP1c (SMP) holophosphatase complex that regulates the MAPK pathway activation. Dephosphorylates MKI67 at the onset of anaphase. The SMP complex specifically dephosphorylates the inhibitory phosphorylation at 'Ser-259' of RAF1 kinase, 'Ser-365' of BRAF kinase and 'Ser-214' of ARAF kinase, stimulating their kinase activities. The SMP complex enhances the dephosphorylation activity and substrate specificity of PP1c. This is Serine/threonine-protein phosphatase PP1-gamma catalytic subunit (PPP1CC) from Canis lupus familiaris (Dog).